The sequence spans 174 residues: Protein MOTHER of FT and TFL1 homolog 2 (174 aa).

This sequence belongs to the phosphatidylethanolamine-binding protein family.

In terms of biological role, may form complexes with phosphorylated ligands by interfering with kinases and their effectors. This is Protein MOTHER of FT and TFL1 homolog 2 from Oryza sativa subsp. japonica (Rice).